A 382-amino-acid chain; its full sequence is Succinate--CoA ligase [ADP-forming] subunit beta (382 aa).

An ATP-grasp domain is found at 9-240 (KELFSKYGVK…PRDVTEFEAY (232 aa)). ATP is bound by residues lysine 45, 52–54 (GRG), valine 94, and glutamate 99. Mg(2+) contacts are provided by asparagine 193 and aspartate 207. Substrate is bound by residues asparagine 260 and 317–319 (GIT).

The protein belongs to the succinate/malate CoA ligase beta subunit family. In terms of assembly, heterotetramer of two alpha and two beta subunits. The cofactor is Mg(2+).

It carries out the reaction succinate + ATP + CoA = succinyl-CoA + ADP + phosphate. It catalyses the reaction GTP + succinate + CoA = succinyl-CoA + GDP + phosphate. It functions in the pathway carbohydrate metabolism; tricarboxylic acid cycle; succinate from succinyl-CoA (ligase route): step 1/1. Functionally, succinyl-CoA synthetase functions in the citric acid cycle (TCA), coupling the hydrolysis of succinyl-CoA to the synthesis of either ATP or GTP and thus represents the only step of substrate-level phosphorylation in the TCA. The beta subunit provides nucleotide specificity of the enzyme and binds the substrate succinate, while the binding sites for coenzyme A and phosphate are found in the alpha subunit. The chain is Succinate--CoA ligase [ADP-forming] subunit beta from Pyrobaculum aerophilum (strain ATCC 51768 / DSM 7523 / JCM 9630 / CIP 104966 / NBRC 100827 / IM2).